Reading from the N-terminus, the 278-residue chain is Putative cysteine-rich repeat secretory protein 19 (278 aa).

An N-terminal signal peptide occupies residues 1-32 (MYSSSSVSKRFVLVPIVVVVTTQLLLVRNVSS). Gnk2-homologous domains lie at 39–147 (YLHH…SLDT) and 160–267 (PSAK…LYPF).

It belongs to the cysteine-rich repeat secretory protein family.

It is found in the secreted. This chain is Putative cysteine-rich repeat secretory protein 19 (CRRSP19), found in Arabidopsis thaliana (Mouse-ear cress).